Here is a 173-residue protein sequence, read N- to C-terminus: C-phycocyanin beta subunit (173 aa).

An N4-methylasparagine modification is found at Asn-73. Cys-83 and Cys-154 together coordinate (2R,3E)-phycocyanobilin.

This sequence belongs to the phycobiliprotein family. Heterodimer of an alpha and a beta subunit, which further assembles into trimers and the trimers into hexamers. Post-translationally, contains two covalently linked bilin chromophores.

The protein resides in the cellular thylakoid membrane. Light-harvesting photosynthetic bile pigment-protein from the phycobiliprotein complex (phycobilisome, PBS). Phycocyanin is the major phycobiliprotein in the PBS rod. In Synechococcus elongatus (strain ATCC 33912 / PCC 7942 / FACHB-805) (Anacystis nidulans R2), this protein is C-phycocyanin beta subunit (cpcB1).